Here is a 460-residue protein sequence, read N- to C-terminus: Baeyer-Villiger oxidase AgnL3 (460 aa).

It belongs to the questin oxidase family. The cofactor is NADPH.

It participates in secondary metabolite biosynthesis. Functionally, baeyer-Villiger oxidase; part of the gene cluster that mediates the biosynthesis of agnestins, dihydroxy-xanthone metabolites. The pathway begins with the assembly and cyclization of atrochrysone thioester by the non-reducing polyketide synthase Agnpks1. The atrochrysone carboxyl ACP thioesterase AgnL7 then breaks the thioester bond and releases the atrochrysone carboxylic acid as the first enzyme-free intermediate. The decarboxylase AgnL1 then catalyzes the concerted decarboxylation-elimination required to convert atochrysone carboxylic acid into emodin anthrone, which is further oxidized to emodin by the anthrone oxygenase AgnL2. Emodin then undergoes reduction catalyzed by the oxidoreductase AgnL4 to yield the dihydroquinone tautomer which is the substrate for reduction by the short chain dehydrogenase AgnL6 reduction to produce hydroxyketone, followed by AgnL8 dehydration and likely spontaneous autoxidation to chrysophanol. Baeyer-Villiger oxidation by the oxidase AgnL3 leads to monodictyphenone via cleavage of the C-10/C-10a bond of chrysophanol. Alternative cleavage at the C-4a/C-10 bond of chrysophanol also leads to the formation some cephalone F. Further conversion to agnestins A and B, requires reduction to dihydro-monodictyphenone, oxidation to agnestin C probably via an epoxide, and rearrangement to either agnestin A or agnestin B directly, although agnestin A or agnestin B can also interconvert. Within the cluster, AgnR1 is the only unassigned oxidoreductase present which could be involved in this conversion. However, AgnR1 seems not to be involved in this step, and thus genes involved in the proposed oxidation/reduction may be located elsewhere on the genome. Further agnestin A derivatives are probably formed by spontaneous decarboxylations, dehydrations and methanolysis reactions. In Paecilomyces divaricatus (Penicillium divaricatum), this protein is Baeyer-Villiger oxidase AgnL3.